We begin with the raw amino-acid sequence, 526 residues long: Bifunctional purine biosynthesis protein PurH (526 aa).

The 147-residue stretch at 1–147 (MSSIKRALIS…KNWKHVAIVT (147 aa)) folds into the MGS-like domain.

This sequence belongs to the PurH family.

The enzyme catalyses (6R)-10-formyltetrahydrofolate + 5-amino-1-(5-phospho-beta-D-ribosyl)imidazole-4-carboxamide = 5-formamido-1-(5-phospho-D-ribosyl)imidazole-4-carboxamide + (6S)-5,6,7,8-tetrahydrofolate. It carries out the reaction IMP + H2O = 5-formamido-1-(5-phospho-D-ribosyl)imidazole-4-carboxamide. It participates in purine metabolism; IMP biosynthesis via de novo pathway; 5-formamido-1-(5-phospho-D-ribosyl)imidazole-4-carboxamide from 5-amino-1-(5-phospho-D-ribosyl)imidazole-4-carboxamide (10-formyl THF route): step 1/1. It functions in the pathway purine metabolism; IMP biosynthesis via de novo pathway; IMP from 5-formamido-1-(5-phospho-D-ribosyl)imidazole-4-carboxamide: step 1/1. The chain is Bifunctional purine biosynthesis protein PurH from Neisseria meningitidis serogroup B (strain ATCC BAA-335 / MC58).